Reading from the N-terminus, the 273-residue chain is Spore development regulator vosA (273 aa).

A compositionally biased stretch (low complexity) spans 66–75 (STTQELQSTQ). A disordered region spans residues 66 to 86 (STTQELQSTQPIAVRQQPRAA). The Velvet domain maps to 70–253 (ELQSTQPIAV…KEQGCIISIK (184 aa)). Residues 211-218 (FPTLTEIK) carry the Nuclear localization signal motif. A compositionally biased stretch (basic and acidic residues) spans 254 to 267 (KGNERARPRGADGR). A disordered region spans residues 254 to 273 (KGNERARPRGADGRSDDEDD).

It belongs to the velvet family. VosA subfamily. Forms a heterodimeric complex with velB; the formation of the velB-vosA complex is light-dependent.

The protein resides in the nucleus. Component of the velB-vosA heterodimeric complex that plays a dual role in activating genes associated with spore maturation and repressing certain development-associated genes. The complex binds DNA through the DNA-binding domain of vosA that recognizes an 11-nucleotide consensus sequence 5'-CTGGCCGCGGC-3' consisting of two motifs in the promoters of key developmental regulatory genes. Positively regulates the expression of wetA and represses abaA and brlA. Acts as a crucial regulator of both conidiation capacity and conidial quality. Responsible for the synthesis and accumulation of intracellular trehalose. In Beauveria bassiana (strain ARSEF 2860) (White muscardine disease fungus), this protein is Spore development regulator vosA.